The chain runs to 354 residues: Deoxyribonuclease-2-beta (354 aa).

The signal sequence occupies residues 1–22; the sequence is MTAKPLRTVLSLLFFALSGVLG. N-linked (GlcNAc...) asparagine glycans are attached at residues Asn70, Asn77, Asn95, Asn98, Asn114, Asn129, Asn208, Asn271, and Asn319.

Belongs to the DNase II family. As to expression, highly expressed in the eye lens. Detected in liver, but not in the other tissues tested.

Its subcellular location is the lysosome. It catalyses the reaction Endonucleolytic cleavage to nucleoside 3'-phosphates and 3'-phosphooligonucleotide end-products.. Functionally, hydrolyzes DNA under acidic conditions. Does not require divalent cations for activity. Participates in the degradation of nuclear DNA during lens cell differentiation. The sequence is that of Deoxyribonuclease-2-beta (Dnase2b) from Mus musculus (Mouse).